We begin with the raw amino-acid sequence, 280 residues long: Transmembrane protein 45B (280 aa).

A run of 7 helical transmembrane segments spans residues His-7 to Leu-27, Leu-49 to Val-69, Met-96 to Leu-116, Leu-120 to Val-140, Ile-150 to Phe-170, Leu-184 to Gly-204, and Val-216 to Ile-236.

The protein belongs to the TMEM45 family.

It localises to the membrane. This is Transmembrane protein 45B (tmem45b) from Xenopus tropicalis (Western clawed frog).